The primary structure comprises 608 residues: uncharacterized protein (608 aa).

A disordered region spans residues 1-21; sequence MHTNSPLRADNQDLETQPLLR. Phosphothreonine is present on threonine 24. The residue at position 27 (serine 27) is a Phosphoserine. Residues 55–75 traverse the membrane as a helical segment; it reads IIYLLGIVLLSFFGVSIVQYI. N-linked (GlcNAc...) asparagine glycosylation is found at asparagine 115, asparagine 141, asparagine 169, asparagine 407, asparagine 425, asparagine 449, asparagine 453, asparagine 527, and asparagine 580.

It is found in the membrane. This is an uncharacterized protein from Saccharomyces cerevisiae (strain ATCC 204508 / S288c) (Baker's yeast).